Consider the following 470-residue polypeptide: Glutamate--tRNA ligase (470 aa).

A 'HIGH' region motif is present at residues 9–19 (PSPTGYLHVGG). A 'KMSKS' region motif is present at residues 236–240 (RLSKR). Lysine 239 contacts ATP.

Belongs to the class-I aminoacyl-tRNA synthetase family. Glutamate--tRNA ligase type 1 subfamily. Monomer.

The protein resides in the cytoplasm. The enzyme catalyses tRNA(Glu) + L-glutamate + ATP = L-glutamyl-tRNA(Glu) + AMP + diphosphate. Functionally, catalyzes the attachment of glutamate to tRNA(Glu) in a two-step reaction: glutamate is first activated by ATP to form Glu-AMP and then transferred to the acceptor end of tRNA(Glu). The protein is Glutamate--tRNA ligase of Colwellia psychrerythraea (strain 34H / ATCC BAA-681) (Vibrio psychroerythus).